The following is a 610-amino-acid chain: UvrABC system protein C (610 aa).

The 79-residue stretch at 16-94 (SQPGVYRMYD…IKLYQPRYNV (79 aa)) folds into the GIY-YIG domain. In terms of domain architecture, UVR spans 204–239 (DQVLTQLISRMETASQNLEFEEAARIRDQIQAVRRV).

It belongs to the UvrC family. Interacts with UvrB in an incision complex.

It is found in the cytoplasm. The UvrABC repair system catalyzes the recognition and processing of DNA lesions. UvrC both incises the 5' and 3' sides of the lesion. The N-terminal half is responsible for the 3' incision and the C-terminal half is responsible for the 5' incision. This is UvrABC system protein C from Shigella boydii serotype 18 (strain CDC 3083-94 / BS512).